We begin with the raw amino-acid sequence, 364 residues long: MSHNSFGHLFRVTTWGESHGLALGCVVDGCPPGITFTEAEIQAYLDKRKPGQSKYTTQRREPDQVRVLSGVLLGDDGVTMTTTGTPISMMIENTDQRSKDYGEIARQYRPGHADYTYDVKYGIRDYRGGGRSSARETAARVAAGAIARKVVPGLEVKGALVAMGVHGIDRRRWNWSEVDNNPFFSPDAGSVELFADYLDGIRKSGSSVGAVIEIIAEGVPAGIGAPIYGKLDQDIASLLMSINAVKGVEIGNGFEAARLTGEENADEMRIGNDGKPLFLSNHAGGILGGIATGAPVVARFAVKPTSSILTPRRSIDKDGKEVDVMTKGRHDPCVGIRAVPIGEAMVACAIADHYLRHRGQTGRV.

Arginine 48 is an NADP(+) binding site. FMN contacts are provided by residues 131–133 (RSS), 243–244 (NA), glycine 288, 303–307 (KPTSS), and arginine 329.

This sequence belongs to the chorismate synthase family. In terms of assembly, homotetramer. FMNH2 serves as cofactor.

The enzyme catalyses 5-O-(1-carboxyvinyl)-3-phosphoshikimate = chorismate + phosphate. It participates in metabolic intermediate biosynthesis; chorismate biosynthesis; chorismate from D-erythrose 4-phosphate and phosphoenolpyruvate: step 7/7. In terms of biological role, catalyzes the anti-1,4-elimination of the C-3 phosphate and the C-6 proR hydrogen from 5-enolpyruvylshikimate-3-phosphate (EPSP) to yield chorismate, which is the branch point compound that serves as the starting substrate for the three terminal pathways of aromatic amino acid biosynthesis. This reaction introduces a second double bond into the aromatic ring system. The protein is Chorismate synthase of Brucella anthropi (strain ATCC 49188 / DSM 6882 / CCUG 24695 / JCM 21032 / LMG 3331 / NBRC 15819 / NCTC 12168 / Alc 37) (Ochrobactrum anthropi).